A 122-amino-acid chain; its full sequence is Small ribosomal subunit protein uS12c (122 aa).

Belongs to the universal ribosomal protein uS12 family. In terms of assembly, part of the 30S ribosomal subunit.

It localises to the plastid. It is found in the chloroplast. With S4 and S5 plays an important role in translational accuracy. Located at the interface of the 30S and 50S subunits. This chain is Small ribosomal subunit protein uS12c (rps12), found in Cyanidioschyzon merolae (strain NIES-3377 / 10D) (Unicellular red alga).